A 552-amino-acid chain; its full sequence is Glutamate--tRNA ligase (552 aa).

Residues proline 41–glycine 51 carry the 'HIGH' region motif. Positions lysine 293–arginine 297 match the 'KMSKS' region motif. Lysine 296 contributes to the ATP binding site.

Belongs to the class-I aminoacyl-tRNA synthetase family. Glutamate--tRNA ligase type 1 subfamily. Monomer.

It localises to the cytoplasm. It carries out the reaction tRNA(Glu) + L-glutamate + ATP = L-glutamyl-tRNA(Glu) + AMP + diphosphate. In terms of biological role, catalyzes the attachment of glutamate to tRNA(Glu) in a two-step reaction: glutamate is first activated by ATP to form Glu-AMP and then transferred to the acceptor end of tRNA(Glu). The sequence is that of Glutamate--tRNA ligase from Clostridium perfringens (strain SM101 / Type A).